Consider the following 1456-residue polypeptide: MAKVREVYQSFTDSTTKTLIQDEAYRNIRPIMEKHKLSNPYAQTIEAANDLEGFGIATNPYSIELHTHAAAKTIENKLLEVLGSLLPQEPVTFMFLKPRKLNFMRRNPRIKDIFHNVAIEPRDVARYPKETIIHKLAEIETDTAYISDTLHFLDPSYIVETFQNCPKLQTLYATLVLPSEAAFKMESTHPNIYSLKYFGDGFQYIPGNHGGGAYHHEFTDLQWLKVGKIKWRDPKDGLLGHLNYTHEQVDTHTVTVQLQESFAANHLYCIRRGNMMTPEVRTFGQPDRYVLPPQIFLPKVHNCKKPILKKTMMQLFLYVRTVKVAKNCDIFAKVRQLIKSSDRDKFSAVELVYLVSYMEFLAALQATTCFSDTLSGGLLTKTLAPVRAWIQEKKMQLCGLEDYVKLVKAVDWRPVDFSFKVETWDFRFTQLGMWKAFQPSELSDVEEMNNFFDDGDLLDCFTRMPAYAVNAEEDLAGMRGNNQEETSTAPREPEGEKKEYINPAETFLDKLTRKHNRETRSRAAKKAKRLAEIQDSMNRDRTEEGSHKTPNMGEAPSNADLPGVNEVEAGTTFPTLKALPQKWEDASSTDSSTIDPTEIIPGEEDDKAATQKVVVGLPWKHWLPQLNAVGFKALEIQRDRNGTMIMPITEMVFGLDKEEFPEGTPEALARELKAMNRSPTTIPLDLLRARDYGSDVKNKRIGAITKTQAASWGEYLTGKIESLPERKVAACVIHGAGGSGKSHAIQKALREIGKGSDITVVLPTNELRLDWSKKVPNTEPYMFKTYEKALIGGTGSIVIFDDYSKLPPGYIEALVSFSTKIKLIILTGDSRQSVYHETSDDASIRHLGPATEVFAKYCRYYLNATHRNKKDLANMLGVYSERTGTTEISMSSEFLEGVPTLVPSDEKRRLYMGTGRNDTFTYAGCQGLTKPKVQIVLDHNTQVCSANVMYSALSRATDRIHFINTSANSSAFWEKLDSTPYLKTFLSVVREHALKEYEPAEAEPIKEPEPQTHMCVENEESVLEEYKEELLEKFDREIHSDAHGHSNCVQTEDTTIQLFSHQEAKDETLLWATIDARLKTSNQESNFREFLSKRDIGDVLFLNYQKAMGLPKEPIPFSQEVWEACAHEVQSKYLSKSKCNLINGTVRQSPDFDENKIMVFLKSQWVTKVEKLGLPKIKPGQTIAAFYQQTVMLFGTMARYMRWFRQAFQPKEVFINCETTPEDMSAWALSNWNFTRPSLANDYTAFDQSQDGAMLQFEVLKAKHHCIPEEIIQAYIDIKTNAQIFLGTLSIMRLTGEGPTFDANTECNIAFTHTKFDIPAGTAQVYAGDDSALDCVPEVKQSFHRLEDKLLLKSKPVITQQKKGSWPEFCGWLITPKGVMKDPIKLHVSLKLAEAKGELRKCQDSYEIDLSYAYDHKDSLHDLFDEKQCQAHTLTCRTLIKSGRGTVSLPRLKNFL.

One can recognise an Alphavirus-like MT domain in the interval 59–224 (NPYSIELHTH…HHEFTDLQWL (166 aa)). Disordered regions lie at residues 474–499 (DLAG…EKKE), 513–563 (RKHN…DLPG), and 581–600 (QKWE…TEII). Residues 480 to 489 (GNNQEETSTA) are compositionally biased toward polar residues. The segment covering 513 to 528 (RKHNRETRSRAAKKAK) has biased composition (basic residues). The segment covering 529-547 (RLAEIQDSMNRDRTEEGSH) has biased composition (basic and acidic residues). Residues 586 to 595 (ASSTDSSTID) are compositionally biased toward polar residues. Positions 695-862 (DVKNKRIGAI…VFAKYCRYYL (168 aa)) constitute a (+)RNA virus helicase ATP-binding domain. 735–742 (GAGGSGKS) is a binding site for ATP. The 135-residue stretch at 863–997 (NATHRNKKDL…VVREHALKEY (135 aa)) folds into the (+)RNA virus helicase C-terminal domain. In terms of domain architecture, RdRp catalytic spans 1236-1343 (RPSLANDYTA…DCVPEVKQSF (108 aa)).

Belongs to the potexvirus/carlavirus RNA replication protein family.

It carries out the reaction RNA(n) + a ribonucleoside 5'-triphosphate = RNA(n+1) + diphosphate. It catalyses the reaction ATP + H2O = ADP + phosphate + H(+). In terms of biological role, RNA replication. The central part of this protein possibly functions as an ATP-binding helicase. The sequence is that of RNA replication protein from Brassica campestris (Field mustard).